Consider the following 407-residue polypeptide: Peptidase T (407 aa).

Zn(2+) is bound at residue histidine 82. The active site involves aspartate 84. Aspartate 143 lines the Zn(2+) pocket. The Proton acceptor role is filled by glutamate 177. Residues glutamate 178, aspartate 200, and histidine 382 each coordinate Zn(2+).

It belongs to the peptidase M20B family. Requires Zn(2+) as cofactor.

It localises to the cytoplasm. The catalysed reaction is Release of the N-terminal residue from a tripeptide.. Cleaves the N-terminal amino acid of tripeptides. This Streptococcus pyogenes serotype M3 (strain ATCC BAA-595 / MGAS315) protein is Peptidase T.